We begin with the raw amino-acid sequence, 343 residues long: 3-dehydroquinate synthase (343 aa).

NAD(+) contacts are provided by residues 61-66, 95-96, 119-120, Lys-132, Lys-141, Asn-142, and 159-162; these read SGEKYK, GV, TT, and FLKT. The Zn(2+) site is built by Glu-174, His-231, and His-248.

This sequence belongs to the sugar phosphate cyclases superfamily. Dehydroquinate synthase family. As to quaternary structure, homodimer. It depends on NAD(+) as a cofactor. Co(2+) serves as cofactor. Requires Zn(2+) as cofactor.

The protein localises to the cytoplasm. The enzyme catalyses 7-phospho-2-dehydro-3-deoxy-D-arabino-heptonate = 3-dehydroquinate + phosphate. Its pathway is metabolic intermediate biosynthesis; chorismate biosynthesis; chorismate from D-erythrose 4-phosphate and phosphoenolpyruvate: step 2/7. In terms of biological role, catalyzes the conversion of 3-deoxy-D-arabino-heptulosonate 7-phosphate (DAHP) to dehydroquinate (DHQ). This chain is 3-dehydroquinate synthase, found in Helicobacter pylori (strain ATCC 700392 / 26695) (Campylobacter pylori).